The primary structure comprises 494 residues: Probable cytochrome P450 518A1 (494 aa).

Residues 1–21 (MSILIILIISIIFYLIFDFLY) traverse the membrane as a helical segment. C438 serves as a coordination point for heme.

This sequence belongs to the cytochrome P450 family. The cofactor is heme.

Its subcellular location is the membrane. The polypeptide is Probable cytochrome P450 518A1 (cyp518A1) (Dictyostelium discoideum (Social amoeba)).